The sequence spans 588 residues: Vesicular glutamate transporter 3 (588 aa).

Over 1–76 (MPFNAFDTFK…CSCCGIPKRY (76 aa)) the chain is Cytoplasmic. Residues 77–97 (IIAVMSGLGFCISFGIRCNLG) traverse the membrane as a helical segment. Over 98 to 130 (VAIVEMVNNSTVYVDGKPEIQTAQFNWDPETVG) the chain is Vesicular. Residue Asn-106 is glycosylated (N-linked (GlcNAc...) asparagine). Residues 131 to 151 (LIHGSFFWGYIVTQIPGGFIS) form a helical membrane-spanning segment. At 152 to 153 (NK) the chain is on the cytoplasmic side. Residues 154–174 (FAANRVFGAAIFLTSTLNMFI) traverse the membrane as a helical segment. Over 175–182 (PSAARVHY) the chain is Vesicular. Residues 183 to 203 (GCVMCVRILQGLVEGVTYPAC) traverse the membrane as a helical segment. The Cytoplasmic segment spans residues 204–221 (HGMWSKWAPPLERSRLAT). A helical transmembrane segment spans residues 222–242 (TSFCGSYAGAVVAMPLAGVLV). At 243–249 (QYIGWAS) the chain is on the vesicular side. The helical transmembrane segment at 250 to 270 (VFYIYGMFGIIWYMFWLLQAY) threads the bilayer. Topologically, residues 271-314 (ECPAVHPTISNEERTYIETSIGEGANLASLSKFNTPWRRFFTSL) are cytoplasmic. Residues 315 to 335 (PVYAIIVANFCRSWTFYLLLI) form a helical membrane-spanning segment. Topologically, residues 336–353 (SQPAYFEEVFGFAISKVG) are vesicular. Residues 354-374 (LLSAVPHMVMTIVVPIGGQLA) form a helical membrane-spanning segment. Topologically, residues 375–390 (DYLRSRKILTTTAVRK) are cytoplasmic. A helical transmembrane segment spans residues 391–411 (IMNCGGFGMEATLLLVVGFSH). The Vesicular segment spans residues 412-413 (TK). Residues 414 to 434 (GVAISFLVLAVGFSGFAISGF) traverse the membrane as a helical segment. Residues 435–447 (NVNHLDIAPRYAS) lie on the Cytoplasmic side of the membrane. The chain crosses the membrane as a helical span at residues 448-468 (ILMGISNGVGTLSGMVCPLIV). Residues 469–481 (GAMTKHKTREEWQ) lie on the Vesicular side of the membrane. A helical membrane pass occupies residues 482–502 (NVFLIAALVHYSGVIFYGVFA). Residues 503-585 (SGEKQDWADP…LSYQNEEDFS (83 aa)) are Cytoplasmic-facing. Residues 539-588 (FVSPRKKMSYGATTQNCEVQKTDRRQQRESAFEGEEPLSYQNEEDFSETS) are disordered. The span at 558–569 (QKTDRRQQRESA) shows a compositional bias: basic and acidic residues. Over residues 570-588 (FEGEEPLSYQNEEDFSETS) the composition is skewed to acidic residues.

It belongs to the major facilitator superfamily. Sodium/anion cotransporter family. VGLUT subfamily. In terms of tissue distribution, expressed in brain, kidney and liver. Expressed within the amygdala, brainstem, cerberal cortex, dorsal root ganglia, dorsal spinal cord, hippocampus, hypothalamus, retina, striatum and ventral spinal cord. Expressed within neurons of the caudate-putamen, olfactory tubercle, nucleus accumbens, hippocampus, interpeduncular nucleus and dorsal and medial raphe nuclei. Expressed in inner hair cells of the ear. Expressed at synaptic terminals within the lateral superior olive (LSO), a nucleus of the mammalian sound localization system, and in the medial nucleus of the trapezoid body (MNTB), which provides inhibitory input to the LSO.

The protein localises to the cytoplasmic vesicle. It is found in the secretory vesicle. It localises to the synaptic vesicle membrane. The protein resides in the cell membrane. Its subcellular location is the synapse. The protein localises to the synaptosome. It catalyses the reaction L-glutamate(out) = L-glutamate(in). It carries out the reaction chloride(in) = chloride(out). The enzyme catalyses 3 Na(+)(out) + phosphate(out) = 3 Na(+)(in) + phosphate(in). Its activity is regulated as follows. The L-glutamate uniporter activity exhibits a biphasic dependence on chloride concentration. Chloride channel activity is allosterically activated by lumenal H(+) and Cl(-) leading to synaptic vesicles acidification. The glutamate transport activity is allosterically activated by lumenal H(+) and Cl(-), preventing non-vesicular L-glutamate release. In terms of biological role, multifunctional transporter that transports L-glutamate as well as multiple ions such as chloride, sodium and phosphate. At the synaptic vesicle membrane, mainly functions as an uniporter that mediates the uptake of L-glutamate into synaptic vesicles at presynaptic nerve terminals of excitatory neural cells. The L-glutamate uniporter activity is electrogenic and is driven by the proton electrochemical gradient, mainly by the electrical gradient established by the vacuolar H(+)-ATPase across the synaptic vesicle membrane. In addition, functions as a chloride channel that allows a chloride permeation through the synaptic vesicle membrane that affects the proton electrochemical gradient and promotes synaptic vesicles acidification. At the plasma membrane, following exocytosis, functions as a symporter of Na(+) and phosphate from the extracellular space to the cytoplasm allowing synaptic phosphate homeostasis regulation. The symporter activity is electrogenic. Moreover, operates synergistically with SLC18A3/VACHT under a constant H(+) gradient, thereby allowing striatal vesicular acetylcholine uptake. The chain is Vesicular glutamate transporter 3 from Rattus norvegicus (Rat).